A 380-amino-acid chain; its full sequence is Erythronate-4-phosphate dehydrogenase (380 aa).

Substrate-binding residues include serine 45 and threonine 66. Residue aspartate 146 coordinates NAD(+). Arginine 207 is a catalytic residue. Aspartate 232 contributes to the NAD(+) binding site. Residue glutamate 237 is part of the active site. The active-site Proton donor is the histidine 254. Glycine 257 is an NAD(+) binding site. Substrate is bound at residue tyrosine 258.

Belongs to the D-isomer specific 2-hydroxyacid dehydrogenase family. PdxB subfamily. As to quaternary structure, homodimer.

Its subcellular location is the cytoplasm. The catalysed reaction is 4-phospho-D-erythronate + NAD(+) = (R)-3-hydroxy-2-oxo-4-phosphooxybutanoate + NADH + H(+). The protein operates within cofactor biosynthesis; pyridoxine 5'-phosphate biosynthesis; pyridoxine 5'-phosphate from D-erythrose 4-phosphate: step 2/5. Catalyzes the oxidation of erythronate-4-phosphate to 3-hydroxy-2-oxo-4-phosphonooxybutanoate. This chain is Erythronate-4-phosphate dehydrogenase, found in Marinomonas sp. (strain MWYL1).